The chain runs to 651 residues: Methionine--tRNA ligase (651 aa).

A 'HIGH' region motif is present at residues 10–20; that stretch reads AYTNGPLHLGH. The Zn(2+) site is built by Cys-142, Cys-145, Cys-154, and Cys-157. A 'KMSKS' region motif is present at residues 320-324; it reads KMSTS. An ATP-binding site is contributed by Thr-323. A tRNA-binding domain is found at 550-651; the sequence is YLEKIDLRVG…KDIKAGSKVR (102 aa).

This sequence belongs to the class-I aminoacyl-tRNA synthetase family. MetG type 1 subfamily. As to quaternary structure, homodimer. Zn(2+) serves as cofactor.

Its subcellular location is the cytoplasm. It carries out the reaction tRNA(Met) + L-methionine + ATP = L-methionyl-tRNA(Met) + AMP + diphosphate. Is required not only for elongation of protein synthesis but also for the initiation of all mRNA translation through initiator tRNA(fMet) aminoacylation. This chain is Methionine--tRNA ligase, found in Methanocaldococcus jannaschii (strain ATCC 43067 / DSM 2661 / JAL-1 / JCM 10045 / NBRC 100440) (Methanococcus jannaschii).